The following is a 269-amino-acid chain: Tryptophan synthase alpha chain (269 aa).

Residues Glu49 and Asp60 each act as proton acceptor in the active site.

This sequence belongs to the TrpA family. In terms of assembly, tetramer of two alpha and two beta chains.

The catalysed reaction is (1S,2R)-1-C-(indol-3-yl)glycerol 3-phosphate + L-serine = D-glyceraldehyde 3-phosphate + L-tryptophan + H2O. The protein operates within amino-acid biosynthesis; L-tryptophan biosynthesis; L-tryptophan from chorismate: step 5/5. In terms of biological role, the alpha subunit is responsible for the aldol cleavage of indoleglycerol phosphate to indole and glyceraldehyde 3-phosphate. This chain is Tryptophan synthase alpha chain, found in Actinobacillus pleuropneumoniae serotype 3 (strain JL03).